We begin with the raw amino-acid sequence, 375 residues long: Glucokinase 1 (375 aa).

25–30 (CDVGGS) contacts ATP.

Belongs to the bacterial glucokinase family. In terms of assembly, monomer. Post-translationally, the N-terminus is blocked.

The catalysed reaction is D-glucose + ATP = D-glucose 6-phosphate + ADP + H(+). The sequence is that of Glucokinase 1 (GK1) from Trichomonas vaginalis.